The sequence spans 276 residues: Cell wall synthesis protein KRE9 (276 aa).

A signal peptide spans 1 to 21 (MRLQRNSIICALVFLVSFVLG).

This sequence belongs to the KRE9/KNH1 family. Post-translationally, O-glycosylated.

The protein resides in the secreted. The protein localises to the cell wall. Involved in cell wall beta(1-&gt;6) glucan synthesis. The polypeptide is Cell wall synthesis protein KRE9 (Saccharomyces cerevisiae (strain ATCC 204508 / S288c) (Baker's yeast)).